Here is a 126-residue protein sequence, read N- to C-terminus: Large ribosomal subunit protein bL19 (126 aa).

This sequence belongs to the bacterial ribosomal protein bL19 family.

In terms of biological role, this protein is located at the 30S-50S ribosomal subunit interface and may play a role in the structure and function of the aminoacyl-tRNA binding site. This Bordetella bronchiseptica (strain ATCC BAA-588 / NCTC 13252 / RB50) (Alcaligenes bronchisepticus) protein is Large ribosomal subunit protein bL19.